The primary structure comprises 312 residues: D-alanine--D-alanine ligase (312 aa).

The 201-residue stretch at 108 to 308 (KLVWQQTGIP…YSELVVKVLS (201 aa)) folds into the ATP-grasp domain. Position 138–193 (138–193 (VAKLGMPLFVKPASEGSSVAVEKVKSADALPAALEEAAKHDKIVIVEKSIEGGGEY)) interacts with ATP. D262, E275, and N277 together coordinate Mg(2+).

Belongs to the D-alanine--D-alanine ligase family. Mg(2+) is required as a cofactor. It depends on Mn(2+) as a cofactor.

It localises to the cytoplasm. It carries out the reaction 2 D-alanine + ATP = D-alanyl-D-alanine + ADP + phosphate + H(+). Its pathway is cell wall biogenesis; peptidoglycan biosynthesis. Functionally, cell wall formation. This Burkholderia thailandensis (strain ATCC 700388 / DSM 13276 / CCUG 48851 / CIP 106301 / E264) protein is D-alanine--D-alanine ligase.